The following is a 322-amino-acid chain: Acetylglutamate kinase (322 aa).

Residues 85-86 (GG), R107, and N211 contribute to the substrate site.

It belongs to the acetylglutamate kinase family. ArgB subfamily.

It is found in the cytoplasm. It catalyses the reaction N-acetyl-L-glutamate + ATP = N-acetyl-L-glutamyl 5-phosphate + ADP. Its pathway is amino-acid biosynthesis; L-arginine biosynthesis; N(2)-acetyl-L-ornithine from L-glutamate: step 2/4. Its function is as follows. Catalyzes the ATP-dependent phosphorylation of N-acetyl-L-glutamate. This is Acetylglutamate kinase from Methanosarcina barkeri (strain Fusaro / DSM 804).